Here is a 351-residue protein sequence, read N- to C-terminus: 7,8-didemethyl-8-hydroxy-5-deazariboflavin synthase (351 aa).

One can recognise a Radical SAM core domain in the interval 35–275; that stretch reads ITYSKNAFIP…EDISIQVPPN (241 aa). Positions 49, 53, and 56 each coordinate [4Fe-4S] cluster.

It belongs to the radical SAM superfamily. CofG family. As to quaternary structure, consists of two subunits, CofG and CofH. [4Fe-4S] cluster is required as a cofactor.

The catalysed reaction is 5-amino-5-(4-hydroxybenzyl)-6-(D-ribitylimino)-5,6-dihydrouracil + S-adenosyl-L-methionine = 7,8-didemethyl-8-hydroxy-5-deazariboflavin + 5'-deoxyadenosine + L-methionine + NH4(+) + H(+). The protein operates within cofactor biosynthesis; coenzyme F0 biosynthesis. In terms of biological role, catalyzes the radical-mediated synthesis of 7,8-didemethyl-8-hydroxy-5-deazariboflavin from 5-amino-5-(4-hydroxybenzyl)-6-(D-ribitylimino)-5,6-dihydrouracil. The protein is 7,8-didemethyl-8-hydroxy-5-deazariboflavin synthase of Methanococcus vannielii (strain ATCC 35089 / DSM 1224 / JCM 13029 / OCM 148 / SB).